The sequence spans 96 residues: YcgL domain-containing protein VS_0884 (96 aa).

Positions 1–84 (MLCSIYKSSK…PPVNELELHK (84 aa)) constitute a YcgL domain.

The chain is YcgL domain-containing protein VS_0884 from Vibrio atlanticus (strain LGP32) (Vibrio splendidus (strain Mel32)).